The chain runs to 418 residues: UDP-N-acetylglucosamine 1-carboxyvinyltransferase (418 aa).

Residue 22 to 23 (KN) coordinates phosphoenolpyruvate. Arg-92 provides a ligand contact to UDP-N-acetyl-alpha-D-glucosamine. The active-site Proton donor is Cys-116. Position 116 is a 2-(S-cysteinyl)pyruvic acid O-phosphothioketal (Cys-116). Residues 121-125 (RPVDL), Asp-305, and Ile-327 each bind UDP-N-acetyl-alpha-D-glucosamine.

It belongs to the EPSP synthase family. MurA subfamily.

Its subcellular location is the cytoplasm. The catalysed reaction is phosphoenolpyruvate + UDP-N-acetyl-alpha-D-glucosamine = UDP-N-acetyl-3-O-(1-carboxyvinyl)-alpha-D-glucosamine + phosphate. It functions in the pathway cell wall biogenesis; peptidoglycan biosynthesis. In terms of biological role, cell wall formation. Adds enolpyruvyl to UDP-N-acetylglucosamine. The sequence is that of UDP-N-acetylglucosamine 1-carboxyvinyltransferase from Acidiphilium cryptum (strain JF-5).